Reading from the N-terminus, the 87-residue chain is Keratin-associated protein 7-1 (87 aa).

An 11 X 2 AA repeats of G-[YCGS] region spans residues 43 to 84 (GCGCNGYSSLGYSFGGSNINNLGGCYGGSFYRPWGSGSGFGY).

This sequence belongs to the KRTAP type 7 family. As to quaternary structure, interacts with hair keratins. In terms of tissue distribution, expressed in the upper portion of the hair cortex.

In terms of biological role, in the hair cortex, hair keratin intermediate filaments are embedded in an interfilamentous matrix, consisting of hair keratin-associated proteins (KRTAP), which are essential for the formation of a rigid and resistant hair shaft through their extensive disulfide bond cross-linking with abundant cysteine residues of hair keratins. The matrix proteins include the high-sulfur and high-glycine-tyrosine keratins. This chain is Keratin-associated protein 7-1 (KRTAP7-1), found in Homo sapiens (Human).